We begin with the raw amino-acid sequence, 211 residues long: UPF0056 membrane protein BUsg_257 (211 aa).

6 helical membrane passes run 14 to 34, 54 to 74, 76 to 96, 116 to 136, 144 to 164, and 185 to 205; these read FFVSLCALVNPIGMIPIFTTM, AFIILLISLFAGNSILNAFGI, INSFRIAGGILIISIAFSMIS, VVPLAMPLIAGPGAISSTIVW, SDFLGCSIAIFLFAFVCWLCF, and IMGLLLMSLGIEFLSIGIKSI.

Belongs to the UPF0056 (MarC) family.

The protein localises to the cell membrane. The sequence is that of UPF0056 membrane protein BUsg_257 from Buchnera aphidicola subsp. Schizaphis graminum (strain Sg).